A 134-amino-acid polypeptide reads, in one-letter code: uncharacterized protein (134 aa).

One can recognise an HIT domain in the interval 4 to 107 (IFTKIINREL…PTHSLSNFSF (104 aa)). Positions 91-95 (HLHIH) match the Histidine triad motif motif.

This is an uncharacterized protein from Mycobacterium leprae (strain TN).